We begin with the raw amino-acid sequence, 412 residues long: Probable inactive allantoicase (412 aa).

The protein belongs to the allantoicase family.

In terms of biological role, the function of this enzyme is unclear as allantoicase activity is not known to exist in mammals. The chain is Probable inactive allantoicase (ALLC) from Bos taurus (Bovine).